The sequence spans 300 residues: Oxidoreductase BOA1 (300 aa).

The protein belongs to the NmrA-type oxidoreductase family. Isoflavone reductase subfamily.

Its pathway is polyketide biosynthesis. In terms of biological role, oxidoreductase; part of the gene cluster A that mediates the biosynthesis of botcinic acid and its botcinin derivatives, acetate-derived polyketides that contribute to virulence when combined with the sesquiterpene botrydial. Botcinic acid and its derivatives have been shown to induce chlorosis and necrosis during host plant infection, but also have antifungal activities. Two polyketide synthases, BOA6 and BOA9, are involved in the biosynthesis of botcinins. BOA6 mediates the formation of the per-methylated tetraketide core by condensation of four units of malonyl-CoA with one unit of acetyl-CoA, which would be methylated in activated methylene groups to yield a bicyclic acid intermediate that could then either be converted to botrylactone derivatives or lose the starter acetate unit through a retro-Claisen type C-C bond cleavage to yield botcinin derivatives. The second polyketide synthase, BOA9, is probably required for the biosynthesis of the tetraketide side chain of botcinins. The methyltransferase (MT) domain within BOA6 is probably responsible for the incorporation of four methyl groups. The trans-enoyl reductase BOA5 might take over the enoyl reductase function of BOA6 that misses an ER domain. The monooxygenases BOA2, BOA3 and BOA4 might be involved in further hydroxylations at C4, C5 and C8, whereas BOA7, close to BOA9, could potentially be involved in the hydroxylation at C4 in the side chain of botcinins. The protein is Oxidoreductase BOA1 of Botryotinia fuckeliana (strain B05.10) (Noble rot fungus).